The primary structure comprises 185 residues: MVSSWRVQQAAQNIRAGAVIAYPTEAVWGLGCDPWDEEAVYRLLAIKLRPVEKGLILIADNIRQFDFLFEDFPELWLDRMASTWPGPNTWLVPHQNLLPEWITGIHETVALRVTDHPTVRELCALVGPLISTSANPAGRPAARSRLRVEQYFRGQINGVLGGSLGGRRNPSVIRDIATGQVMRAG.

In terms of domain architecture, YrdC-like spans 4-185 (SWRVQQAAQN…IATGQVMRAG (182 aa)).

The protein belongs to the SUA5 family. TsaC subfamily.

The protein localises to the cytoplasm. It catalyses the reaction L-threonine + hydrogencarbonate + ATP = L-threonylcarbamoyladenylate + diphosphate + H2O. Its function is as follows. Required for the formation of a threonylcarbamoyl group on adenosine at position 37 (t(6)A37) in tRNAs that read codons beginning with adenine. Catalyzes the conversion of L-threonine, HCO(3)(-)/CO(2) and ATP to give threonylcarbamoyl-AMP (TC-AMP) as the acyladenylate intermediate, with the release of diphosphate. The polypeptide is Threonylcarbamoyl-AMP synthase (Pseudomonas syringae pv. tomato (strain ATCC BAA-871 / DC3000)).